A 307-amino-acid polypeptide reads, in one-letter code: Protoheme IX farnesyltransferase (307 aa).

9 helical membrane passes run 31 to 51 (VMSL…YSVH), 52 to 72 (PFIA…AGAI), 102 to 119 (ALSF…FMAL), 123 to 145 (LLAS…IWLK), 151 to 171 (NIVI…AAVS), 179 to 199 (VILF…LALF), 225 to 245 (ILIY…IGMS), 247 to 267 (FIYL…AGSL), and 281 to 301 (FVYS…TNTI).

This sequence belongs to the UbiA prenyltransferase family. Protoheme IX farnesyltransferase subfamily.

It is found in the cell inner membrane. It carries out the reaction heme b + (2E,6E)-farnesyl diphosphate + H2O = Fe(II)-heme o + diphosphate. It participates in porphyrin-containing compound metabolism; heme O biosynthesis; heme O from protoheme: step 1/1. In terms of biological role, converts heme B (protoheme IX) to heme O by substitution of the vinyl group on carbon 2 of heme B porphyrin ring with a hydroxyethyl farnesyl side group. This is Protoheme IX farnesyltransferase from Rickettsia canadensis (strain McKiel).